The primary structure comprises 363 residues: MVQEDDENLRNSMSLRPTSLSTRPTSLSVNGNEKTLPEESVLRSLSTGTLKYPDDEHLYTFSSANLQDLGAIGNGNFGTVYKMRHKETGKLIAVKRIRCNNIGHREQIRLLREHDTIVKSEKGPNIVKFYGAIFSEGDCWICMELMDISMDLLYKRVYMVKNSRLNENVVGHITVCTVDALDYLKKELKIIHRDVKPSNILVDGTGAVKLCDFGICGQLEESFAKTHDAGCQPYLAPERITSSDKYDVRSDVWSLGITLYEIATGKFPYQEWNSLFDQIATVVSGDPPILHPDSDDFHYSLPLVKFINTCLTKDRRHRPKYDTLKSFDFYRIYAVAGPEIEEAKRILGVEAIDTRNHPVDHRG.

The segment at methionine 1–glutamate 38 is disordered. Over residues serine 14–serine 28 the composition is skewed to low complexity. Residues leucine 66–tyrosine 330 form the Protein kinase domain. Residues isoleucine 72–valine 80 and lysine 95 each bind ATP. Aspartate 194 serves as the catalytic Proton acceptor.

The protein belongs to the protein kinase superfamily. STE Ser/Thr protein kinase family. MAP kinase kinase subfamily. As to expression, expressed in the pharynx, including the corpus, isthmus and terminal bulb.

The protein resides in the cytoplasm. The catalysed reaction is L-seryl-[protein] + ATP = O-phospho-L-seryl-[protein] + ADP + H(+). The enzyme catalyses L-threonyl-[protein] + ATP = O-phospho-L-threonyl-[protein] + ADP + H(+). It carries out the reaction L-tyrosyl-[protein] + ATP = O-phospho-L-tyrosyl-[protein] + ADP + H(+). Its function is as follows. Activity is required in presynaptic neurons, in a dose-dependent manner, for normal presynaptic development and morphology. Plays a role in the formation of muscle connections, also called muscle arm extensions, between the body wall and the motor axons in the dorsal and ventral cord. This Caenorhabditis elegans protein is MAP kinase kinase mkk-4 (mkk-4).